A 460-amino-acid polypeptide reads, in one-letter code: Spermatogenesis-defective protein 39 homolog (460 aa).

Position 21 is a phosphothreonine (Thr21). Residues 70 to 101 (SIKETAGSSGSTSEGREQMKGRNSFYTQLPKP) form a disordered region. Low complexity predominate over residues 73-82 (ETAGSSGSTS). Residue Thr115 is modified to Phosphothreonine. Residues Ser119, Ser122, and Ser128 each carry the phosphoserine modification. Residues 121-133 (QSLSDALSDTPAK) show a composition bias toward polar residues. Positions 121–141 (QSLSDALSDTPAKTYSPELGR) are disordered. Thr130 bears the Phosphothreonine mark.

Belongs to the SPE39 family. Interacts with VPS33B. Associates with the homotypic fusion and vacuole protein sorting (HOPS) complex; impaired by VPS33B. Interacts with RAB11A.

It is found in the cytoplasm. It localises to the cytoplasmic vesicle. The protein localises to the early endosome. The protein resides in the recycling endosome. Its subcellular location is the late endosome. Functionally, proposed to be involved in endosomal maturation implicating in part VPS33B. In epithelial cells, the VPS33B:VIPAS39 complex may play a role in the apical RAB11A-dependent recycling pathway and in the maintenance of the apical-basolateral polarity. May play a role in lysosomal trafficking, probably via association with the core HOPS complex in a discrete population of endosomes; the functions seems to be independent of VPS33B. May play a role in vesicular trafficking during spermatogenesis. May be involved in direct or indirect transcriptional regulation of E-cadherin. In Rattus norvegicus (Rat), this protein is Spermatogenesis-defective protein 39 homolog (Vipas39).